A 1107-amino-acid chain; its full sequence is RNA2 polyprotein (1107 aa).

The disordered stretch occupies residues 553 to 584 (SRSMRFKSPSDLWSRPSVDGGSTSTQPPSKGS). Positions 572–581 (GGSTSTQPPS) are enriched in polar residues.

The protein belongs to the nepoviruses RNA2 polyprotein family. In terms of processing, specific enzymatic cleavages in vivo by the P1 encoded 3C-like protease yield mature proteins.

Its subcellular location is the host cell junction. It localises to the host plasmodesma. The protein localises to the host cytoplasm. The protein resides in the host nucleus. It is found in the virion. Functionally, implicated in RNA2 replication. Could also be required for nematode transmission of the virus. Transports viral genome to neighboring plant cells directly through plasmosdesmata, without any budding. The movement protein allows efficient cell to cell propagation, by bypassing the host cell wall barrier. Acts by forming a tubular structure at the host plasmodesmata, enlarging it enough to allow free passage of virion capsids. This chain is RNA2 polyprotein, found in Raspberry ringspot virus (strain S) (RpRSV).